Consider the following 476-residue polypeptide: MSKKLGNNSKKIAFVHPDLGIGGAERLVVDAAVGLQELENEVTIYTSHCDKKHCFEEVSSNLLDVEVYGDFFPTNVLKRFHILFAIIRQFYLVLALIFTGKIKQYDYFIVDQLSFCIPLLCCFSRPECKILFYCHFPDQLLALKGGFLKRFYRMPFDLIEEWTTGISDQIVVNSKFTKGIFHKTFKGLKNIEPGVIYPCVDLNSATDTEEDKLMDEEVNEFFKGGKFFLSVNRFERKKNIGLAIQSFAKFKAQLPKNVSEDNRIKPRLVVAGGFDPRVLENVEYLQELNGLSESLNLKCFTIRGKLLIIPPATDILFLPSIKSSLKKSLIKNAELLLYTPSFEHFGIVPVESMLFKTPVLSANNGGPLESIVHFTSDNIATATGYSQEPNDELWSKTMHTFYTELDEATKLKLGENGLTRVHELFSRHQMSEAFMQNLIQSNSKDEEKGILYGILKMWRIELLFVLISYYLVRLYK.

Residue Asn7 is glycosylated (N-linked (GlcNAc...) asparagine). A helical membrane pass occupies residues Phe80 to Gly100. N-linked (GlcNAc...) asparagine glycosylation occurs at Asn257. A helical transmembrane segment spans residues Gly449–Tyr469.

The protein belongs to the glycosyltransferase group 1 family.

It localises to the endoplasmic reticulum membrane. It carries out the reaction a beta-D-Man-(1-&gt;4)-beta-D-GlcNAc-(1-&gt;4)-alpha-D-GlcNAc-diphospho-di-trans,poly-cis-dolichol + GDP-alpha-D-mannose = an alpha-D-Man-(1-&gt;3)-beta-D-Man-(1-&gt;4)-beta-D-GlcNAc-(1-&gt;4)-alpha-D-GlcNAc-diphospho-di-trans,poly-cis-dolichol + GDP + H(+). It catalyses the reaction an alpha-D-Man-(1-&gt;3)-beta-D-Man-(1-&gt;4)-beta-D-GlcNAc-(1-&gt;4)-alpha-D-GlcNAc-diphospho-di-trans,poly-cis-dolichol + GDP-alpha-D-mannose = an alpha-D-Man-(1-&gt;3)-[alpha-D-Man-(1-&gt;6)]-beta-D-Man-(1-&gt;4)-beta-D-GlcNAc-(1-&gt;4)-alpha-D-GlcNAc-diphospho-di-trans,poly-cis-dolichol + GDP + H(+). It functions in the pathway protein modification; protein glycosylation. Its function is as follows. Mannosylates Man(2)GlcNAc(2)-dolichol diphosphate and Man(1)GlcNAc(2)-dolichol diphosphate to form Man(3)GlcNAc(2)-dolichol diphosphate. The chain is Alpha-1,3/1,6-mannosyltransferase ALG2 (ALG2) from Debaryomyces hansenii (strain ATCC 36239 / CBS 767 / BCRC 21394 / JCM 1990 / NBRC 0083 / IGC 2968) (Yeast).